Here is a 2153-residue protein sequence, read N- to C-terminus: Genome polyprotein (2153 aa).

Gly2 carries N-myristoyl glycine; by host lipidation. Residues 213 to 240 (HTHPGQSGHQIRGPSQSNDRSGGKPDED) form a disordered region. The span at 216–232 (PGQSGHQIRGPSQSNDR) shows a compositional bias: polar residues. The segment at 565-584 (ELQNNDDPVENFVESTLKEV) is amphipathic alpha-helix. Active-site for protease 2A activity residues include His864 and Asp880. 2 residues coordinate Zn(2+): Cys897 and Cys899. Cys951 serves as the catalytic For protease 2A activity. Residues Cys957 and His959 each contribute to the Zn(2+) site. The membrane-binding stretch occupies residues 1088-1158 (SDSWLRKFTE…GFSSASSEAQ (71 aa)). The segment at 1088 to 1224 (SDSWLRKFTE…NPGCGKSLVT (137 aa)) is oligomerization. Positions 1109–1113 (SIKIG) are RNA-binding. Residues 1187-1346 (TKIQKDLKQL…FRNTTGLLDV (160 aa)) form the SF3 helicase domain. 1214–1221 (GNPGCGKS) provides a ligand contact to ATP. Zn(2+) is bound by residues Cys1353, Cys1365, and Cys1370. The C4-type; degenerate zinc-finger motif lies at 1353-1370 (CTGCPKPAHYKTCCPLLC). The interval 1397–1404 (ENATRKKV) is RNA-binding. The interval 1408 to 1413 (LDAIFQ) is oligomerization. An intramembrane segment occupies 1460-1480 (VHYMLNCLGSLIIILGTVYAL). Residue Tyr1491 is modified to O-(5'-phospho-RNA)-tyrosine. Positions 1511–1689 (GPEHEFVRAL…YGAALLRKYF (179 aa)) constitute a Peptidase C3 domain. Residues His1550, Glu1581, and Cys1657 each act as for protease 3C activity in the active site. The RdRp catalytic domain maps to 1920–2033 (GELLAFDYTN…SYPFELDPME (114 aa)). Mg(2+) is bound by residues Asp1926 and Asp2019.

This sequence belongs to the picornaviruses polyprotein family. Interacts with capsid protein VP1 and capsid protein VP3 to form heterotrimeric protomers. In terms of assembly, interacts with capsid protein VP0, and capsid protein VP3 to form heterotrimeric protomers. Five protomers subsequently associate to form pentamers which serve as building blocks for the capsid. Interacts with capsid protein VP2, capsid protein VP3 and capsid protein VP4 following cleavage of capsid protein VP0. Interacts (via C-terminus) with capsid protein VP4 (via C-terminus). Interacts with host CDHR3 (via N-terminus); this interaction occurs near each threefold vertex of the capsid and allows the virus attachment and entry into the host cell. As to quaternary structure, interacts with capsid protein VP1 and capsid protein VP3 in the mature capsid. Interacts with host CDHR3 (via N-terminus); this interaction occurs near each threefold vertex of the capsid and allows the virus attachment and entry into the host cell. Interacts with capsid protein VP0 and capsid protein VP1 to form heterotrimeric protomers. Five protomers subsequently associate to form pentamers which serve as building blocks for the capsid. Interacts with capsid protein VP4 in the mature capsid. Interacts with protein 2C; this interaction may be important for virion morphogenesis. Interacts with host CDHR3 (via N-terminus); this interaction occurs near each threefold vertex of the capsid and allows the virus attachment and entry into the host cell. In terms of assembly, interacts (via C-terminus) with capsid protein VP1 (via C-terminus). Interacts with capsid protein VP3. As to quaternary structure, homodimer. Homohexamer; forms a hexameric ring structure with 6-fold symmetry characteristic of AAA+ ATPases. Interacts (via N-terminus) with host RTN3 (via reticulon domain); this interaction is important for viral replication. Interacts with capsid protein VP3; this interaction may be important for virion morphogenesis. In terms of assembly, interacts with protein 3CD. As to quaternary structure, homodimer. Interacts with host GBF1. Interacts (via GOLD domain) with host ACBD3 (via GOLD domain); this interaction allows the formation of a viral protein 3A/ACBD3 heterotetramer with a 2:2 stoichiometry, which will stimulate the recruitment of host PI4KB in order to synthesize PI4P at the viral RNA replication sites. Interacts with RNA-directed RNA polymerase. In terms of assembly, interacts with protein 3AB and with RNA-directed RNA polymerase. As to quaternary structure, interacts with Viral protein genome-linked and with protein 3CD. Requires Mg(2+) as cofactor. In terms of processing, specific enzymatic cleavages in vivo by the viral proteases yield processing intermediates and the mature proteins. Myristoylation is required for the formation of pentamers during virus assembly. Further assembly of 12 pentamers and a molecule of genomic RNA generates the provirion. Post-translationally, during virion maturation, immature virions are rendered infectious following cleavage of VP0 into VP4 and VP2. This maturation seems to be an autocatalytic event triggered by the presence of RNA in the capsid and it is followed by a conformational change infectious virion. In terms of processing, myristoylation is required during RNA encapsidation and formation of the mature virus particle. VPg is uridylylated by the polymerase into VPg-pUpU. This acts as a nucleotide-peptide primer for the genomic RNA replication.

The protein localises to the virion. The protein resides in the host cytoplasm. Its subcellular location is the host cytoplasmic vesicle membrane. It localises to the host nucleus. The catalysed reaction is a ribonucleoside 5'-triphosphate + H2O = a ribonucleoside 5'-diphosphate + phosphate + H(+). It carries out the reaction Selective cleavage of Gln-|-Gly bond in the poliovirus polyprotein. In other picornavirus reactions Glu may be substituted for Gln, and Ser or Thr for Gly.. The enzyme catalyses Selective cleavage of Tyr-|-Gly bond in the picornavirus polyprotein.. It catalyses the reaction RNA(n) + a ribonucleoside 5'-triphosphate = RNA(n+1) + diphosphate. Replication or transcription is subject to high level of random mutations by the nucleotide analog ribavirin. Forms an icosahedral capsid of pseudo T=3 symmetry with capsid proteins VP2 and VP3. The capsid is 300 Angstroms in diameter, composed of 60 copies of each capsid protein and enclosing the viral positive strand RNA genome. Capsid protein VP1 mainly forms the vertices of the capsid. The VP1 C-termini form 60 dominant spike-like protrusions on the surface of the virion. Capsid protein VP1 interacts with host cell receptor CDHR3 to provide virion attachment to target host cells. This attachment induces virion internalization. Tyrosine kinases are probably involved in the entry process. After binding to its receptor, the capsid undergoes conformational changes. Capsid protein VP1 N-terminus (that contains an amphipathic alpha-helix) and capsid protein VP4 are externalized. Together, they shape a pore in the host membrane through which viral genome is translocated to host cell cytoplasm. Its function is as follows. Forms an icosahedral capsid of pseudo T=3 symmetry with capsid proteins VP2 and VP3. The capsid is 300 Angstroms in diameter, composed of 60 copies of each capsid protein and enclosing the viral positive strand RNA genome. In terms of biological role, lies on the inner surface of the capsid shell. After binding to the host receptor, the capsid undergoes conformational changes. Capsid protein VP4 is released, Capsid protein VP1 N-terminus is externalized, and together, they shape a pore in the host membrane through which the viral genome is translocated into the host cell cytoplasm. Functionally, component of immature procapsids, which is cleaved into capsid proteins VP4 and VP2 after maturation. Allows the capsid to remain inactive before the maturation step. Cysteine protease that cleaves viral polyprotein and specific host proteins. It is responsible for the autocatalytic cleavage between the P1 and P2 regions, which is the first cleavage occurring in the polyprotein. Also cleaves the host translation initiation factor EIF4G1, in order to shut down the capped cellular mRNA translation. Inhibits the host nucleus-cytoplasm protein and RNA trafficking by cleaving host members of the nuclear pores. Counteracts stress granule formation probably by antagonizing its assembly or promoting its dissassembly. Its function is as follows. Plays an essential role in the virus replication cycle by acting as a viroporin. Creates a pore in the host endoplasmic reticulum and as a consequence releases Ca2+ in the cytoplasm of infected cell. In turn, high levels of cytoplasmic calcium may trigger membrane trafficking and transport of viral ER-associated proteins to viroplasms, sites of viral genome replication. In terms of biological role, induces and associates with structural rearrangements of intracellular membranes. Displays RNA-binding, nucleotide binding and NTPase activities. May play a role in virion morphogenesis and viral RNA encapsidation by interacting with the capsid protein VP3. Functionally, localizes the viral replication complex to the surface of membranous vesicles. Together with protein 3CD binds the Cis-Active RNA Element (CRE) which is involved in RNA synthesis initiation. Acts as a cofactor to stimulate the activity of 3D polymerase, maybe through a nucleid acid chaperone activity. Localizes the viral replication complex to the surface of membranous vesicles. It inhibits host cell endoplasmic reticulum-to-Golgi apparatus transport and causes the disassembly of the Golgi complex, possibly through GBF1 interaction. This would result in depletion of MHC, trail receptors and IFN receptors at the host cell surface. Plays an essential role in viral RNA replication by recruiting ACBD3 and PI4KB at the viral replication sites, thereby allowing the formation of the rearranged membranous structures where viral replication takes place. Its function is as follows. Acts as a primer for viral RNA replication and remains covalently bound to viral genomic RNA. VPg is uridylylated prior to priming replication into VPg-pUpU. The oriI viral genomic sequence may act as a template for this. The VPg-pUpU is then used as primer on the genomic RNA poly(A) by the RNA-dependent RNA polymerase to replicate the viral genome. During genome replication, the VPg-RNA linkage is removed by the host TDP2, thereby accelerating replication. During the late stage of the replication cycle, host TDP2 is excluded from sites of viral RNA synthesis and encapsidation, allowing for the generation of progeny virions. In terms of biological role, involved in the viral replication complex and viral polypeptide maturation. It exhibits protease activity with a specificity and catalytic efficiency that is different from protease 3C. Protein 3CD lacks polymerase activity. Protein 3CD binds to the 5'UTR of the viral genome. Functionally, major viral protease that mediates proteolytic processing of the polyprotein. Cleaves host EIF5B, contributing to host translation shutoff. Also cleaves host PABPC1, contributing to host translation shutoff. Replicates the viral genomic RNA on the surface of intracellular membranes. May form linear arrays of subunits that propagate along a strong head-to-tail interaction called interface-I. Covalently attaches UMP to a tyrosine of VPg, which is used to prime RNA synthesis. The positive stranded RNA genome is first replicated at virus induced membranous vesicles, creating a dsRNA genomic replication form. This dsRNA is then used as template to synthesize positive stranded RNA genomes. ss(+)RNA genomes are either translated, replicated or encapsidated. The polypeptide is Genome polyprotein (Homo sapiens (Human)).